The chain runs to 267 residues: AMP/ADP-polyphosphate phosphotransferase (267 aa).

Belongs to the polyphosphate kinase 2 (PPK2) family. Class III subfamily. Requires Mn(2+) as cofactor.

It catalyses the reaction [phosphate](n) + ADP = [phosphate](n+1) + AMP. It carries out the reaction [phosphate](n) + ATP = [phosphate](n+1) + ADP. Uses inorganic polyphosphate (polyP) as a donor to convert both AMP to ADP and ADP to ATP. Can also use GMP, CMP, UMP, GDP, CDP and UDP. The chain is AMP/ADP-polyphosphate phosphotransferase from Meiothermus ruber (strain ATCC 35948 / DSM 1279 / VKM B-1258 / 21) (Thermus ruber).